The primary structure comprises 205 residues: Recombination protein RecR (205 aa).

A C4-type zinc finger spans residues 60–75 (CKVCHNISDTETCQIC). Residues 83-178 (STVCVVENIR…KLSVIARGIS (96 aa)) enclose the Toprim domain.

Belongs to the RecR family.

In terms of biological role, may play a role in DNA repair. It seems to be involved in an RecBC-independent recombinational process of DNA repair. It may act with RecF and RecO. This Bacteroides thetaiotaomicron (strain ATCC 29148 / DSM 2079 / JCM 5827 / CCUG 10774 / NCTC 10582 / VPI-5482 / E50) protein is Recombination protein RecR.